Reading from the N-terminus, the 437-residue chain is Glutamate-1-semialdehyde 2,1-aminomutase (437 aa).

Lys-274 is subject to N6-(pyridoxal phosphate)lysine.

Belongs to the class-III pyridoxal-phosphate-dependent aminotransferase family. HemL subfamily. In terms of assembly, homodimer. Pyridoxal 5'-phosphate is required as a cofactor.

It localises to the cytoplasm. It catalyses the reaction (S)-4-amino-5-oxopentanoate = 5-aminolevulinate. It functions in the pathway porphyrin-containing compound metabolism; protoporphyrin-IX biosynthesis; 5-aminolevulinate from L-glutamyl-tRNA(Glu): step 2/2. This Verminephrobacter eiseniae (strain EF01-2) protein is Glutamate-1-semialdehyde 2,1-aminomutase.